Reading from the N-terminus, the 155-residue chain is MKIQLIAVGTKMPAWVERGFEEYRRRFPKDMPFELVEIGAGKRGKNADIPRILQKEGEAMLAAAGRSRLVTLDIPGKPWTTEQLAVQLEAWKLDGRDVALLVGGPEGLSPECKAAAEQSWSLSPLTLPHPLVRVLVAESLYRACSITTNHPYHRE.

S-adenosyl-L-methionine is bound by residues Leu72, Gly103, and 122 to 127 (LSPLTL).

The protein belongs to the RNA methyltransferase RlmH family. In terms of assembly, homodimer.

The protein localises to the cytoplasm. It carries out the reaction pseudouridine(1915) in 23S rRNA + S-adenosyl-L-methionine = N(3)-methylpseudouridine(1915) in 23S rRNA + S-adenosyl-L-homocysteine + H(+). Its function is as follows. Specifically methylates the pseudouridine at position 1915 (m3Psi1915) in 23S rRNA. The polypeptide is Ribosomal RNA large subunit methyltransferase H (Aeromonas salmonicida (strain A449)).